The chain runs to 274 residues: 3-methyl-2-oxobutanoate hydroxymethyltransferase (274 aa).

Mg(2+)-binding residues include aspartate 44 and aspartate 83. Residues aspartate 44 to serine 45, aspartate 83, and lysine 113 each bind 3-methyl-2-oxobutanoate. Glutamate 115 is a Mg(2+) binding site. Residue glutamate 182 is the Proton acceptor of the active site.

Belongs to the PanB family. Homodecamer; pentamer of dimers. Mg(2+) serves as cofactor.

It localises to the cytoplasm. The catalysed reaction is 3-methyl-2-oxobutanoate + (6R)-5,10-methylene-5,6,7,8-tetrahydrofolate + H2O = 2-dehydropantoate + (6S)-5,6,7,8-tetrahydrofolate. Its pathway is cofactor biosynthesis; (R)-pantothenate biosynthesis; (R)-pantoate from 3-methyl-2-oxobutanoate: step 1/2. Its function is as follows. Catalyzes the reversible reaction in which hydroxymethyl group from 5,10-methylenetetrahydrofolate is transferred onto alpha-ketoisovalerate to form ketopantoate. This chain is 3-methyl-2-oxobutanoate hydroxymethyltransferase, found in Campylobacter jejuni subsp. doylei (strain ATCC BAA-1458 / RM4099 / 269.97).